We begin with the raw amino-acid sequence, 244 residues long: NAD-dependent protein deacetylase (244 aa).

The Deacetylase sirtuin-type domain maps to 1-244 (MTGEQLAHWI…LSAVQRAVMP (244 aa)). NAD(+) contacts are provided by Ala-22, Thr-26, Phe-33, Arg-34, Gln-103, Ile-105, Asp-106, and His-121. Residue Phe-33 coordinates nicotinamide. The nicotinamide site is built by Ile-105 and Asp-106. His-121 functions as the Proton acceptor in the catalytic mechanism. Residues Cys-129, Cys-132, Cys-150, and Cys-152 each coordinate Zn(2+). Thr-190, Ser-191, Asn-213, and Leu-231 together coordinate NAD(+).

It belongs to the sirtuin family. Class U subfamily. Zn(2+) serves as cofactor.

The protein localises to the cytoplasm. It catalyses the reaction N(6)-acetyl-L-lysyl-[protein] + NAD(+) + H2O = 2''-O-acetyl-ADP-D-ribose + nicotinamide + L-lysyl-[protein]. In terms of biological role, NAD-dependent protein deacetylase which modulates the activities of several enzymes which are inactive in their acetylated form. This is NAD-dependent protein deacetylase from Cutibacterium acnes (strain DSM 16379 / KPA171202) (Propionibacterium acnes).